The primary structure comprises 152 residues: Transcriptional regulator MraZ (152 aa).

2 SpoVT-AbrB domains span residues 5–52 (ATLV…PLPE) and 81–124 (ASEC…DETT).

Belongs to the MraZ family. In terms of assembly, forms oligomers.

The protein resides in the cytoplasm. It localises to the nucleoid. Negatively regulates its own expression and that of the subsequent genes in the proximal part of the division and cell wall (dcw) gene cluster. Acts by binding directly to DNA. May also regulate the expression of genes outside the dcw cluster. This Escherichia coli O127:H6 (strain E2348/69 / EPEC) protein is Transcriptional regulator MraZ.